The chain runs to 132 residues: MAVNDPIADMLTRIRNAVMAKHERVEIPHSKMKVEIARILKEEGYVRDYAVRGSGPQQRIVIELKYGPDGERAITGLRRMSRPGRRVYRKQKDIPRVLDGLGVAILSTSQGILTDHEARRKGVGGEVLCFVY.

The protein belongs to the universal ribosomal protein uS8 family. As to quaternary structure, part of the 30S ribosomal subunit. Contacts proteins S5 and S12.

Its function is as follows. One of the primary rRNA binding proteins, it binds directly to 16S rRNA central domain where it helps coordinate assembly of the platform of the 30S subunit. This Rubrobacter xylanophilus (strain DSM 9941 / JCM 11954 / NBRC 16129 / PRD-1) protein is Small ribosomal subunit protein uS8.